A 93-amino-acid polypeptide reads, in one-letter code: Large ribosomal subunit protein uL23 (93 aa).

The protein belongs to the universal ribosomal protein uL23 family. As to quaternary structure, part of the 50S ribosomal subunit. Contacts protein L29, and trigger factor when it is bound to the ribosome.

In terms of biological role, one of the early assembly proteins it binds 23S rRNA. One of the proteins that surrounds the polypeptide exit tunnel on the outside of the ribosome. Forms the main docking site for trigger factor binding to the ribosome. The protein is Large ribosomal subunit protein uL23 of Natranaerobius thermophilus (strain ATCC BAA-1301 / DSM 18059 / JW/NM-WN-LF).